The chain runs to 395 residues: MEKKTVYNITNSIAISEEEAVNCNIPEVNKAEINLSQLKRNFDIIQGFLKPNTKFMAVLKGDAYGHGIRPIAKELINLKCDVFGVVRLIEAFTLRKAGIKTPIMLLAPISPSQAAWVIRYNIIPMVDSEEIVEALDQSASQNDTIVKLHVKINTGLNRYGVNPENAVKFIREIHEKYLHVQVDGVYTHFQDPDYNPDFTHKQIECFNNIIFQLQKQKLRPRIIHAANSTGIIRYPEAHYDMVRCGTLLFGLEHEQGQRNMPKGIKTLMELKGRIMKVRTIRAGEAGGYGSTFVAKKDSKVAIIAFGYGDGISRGWKEVLVAGKRVPVVNYFMDGLMVDISNIDETVKELDEAVIVGNQGDESITWLEACKSLGSYVDEQIQCITERVPKKYFYEK.

The active-site Proton acceptor; specific for D-alanine is the lysine 60. Position 60 is an N6-(pyridoxal phosphate)lysine (lysine 60). Position 158 (arginine 158) interacts with substrate. The Proton acceptor; specific for L-alanine role is filled by tyrosine 288. Position 332 (methionine 332) interacts with substrate.

It belongs to the alanine racemase family. Pyridoxal 5'-phosphate is required as a cofactor.

The enzyme catalyses L-alanine = D-alanine. It functions in the pathway amino-acid biosynthesis; D-alanine biosynthesis; D-alanine from L-alanine: step 1/1. Functionally, catalyzes the interconversion of L-alanine and D-alanine. May also act on other amino acids. In Clostridium acetobutylicum (strain ATCC 824 / DSM 792 / JCM 1419 / IAM 19013 / LMG 5710 / NBRC 13948 / NRRL B-527 / VKM B-1787 / 2291 / W), this protein is Alanine racemase 2 (alr2).